The chain runs to 75 residues: Antitoxin MT0312 (75 aa).

In terms of biological role, antitoxin component of a type II toxin-antitoxin (TA) system. The sequence is that of Antitoxin MT0312 from Mycobacterium tuberculosis (strain CDC 1551 / Oshkosh).